Reading from the N-terminus, the 412-residue chain is CinA-like protein (412 aa).

This sequence belongs to the CinA family.

The sequence is that of CinA-like protein from Salinibacter ruber (strain DSM 13855 / M31).